A 515-amino-acid polypeptide reads, in one-letter code: Cytochrome P450 monooxygenase mfmA (515 aa).

The helical transmembrane segment at 3–23 (KISIIPIVGVALSLAIILQLG) threads the bilayer. Residue Cys453 participates in heme binding.

It belongs to the cytochrome P450 family. Requires heme as cofactor.

Its subcellular location is the membrane. It functions in the pathway secondary metabolite biosynthesis; terpenoid biosynthesis. Its function is as follows. Cytochrome P450 monooxygenase; part of the gene cluster that mediates the biosynthesis of the phthalide-terpenoid hybrid 11'-O-desmethylfendlerol. Within the pathway, mfma and mfmC act together to convert 3,5-dimethylorsellinic acid (DMOA) into the phthalide 5,7-dihydroxy-4-(hydroxymethyl)-6-methylphthalide. MfmA performs especially an hydroxylation at C-9. The biosynthesis of 11'-O-desmethylfendlerol begins with the NR-PKS mfmB that forms 3,5-dimethylorsellinic acid (DMOA), which is then transformed into the phthalide 5,7-dihydroxy-4-(hydroxymethyl)-6-methylphthalide by the cytochrome P450 monooxygenase mfmA and the hydrolase mfmC. Subsequently, the methyltransferase mfmE catalyzes 7-O-methylation to yield 5-hydroxy-4-(hydroxymethyl)-7-methoxy-6-methylphthalide, which undergoes C-3 hydroxylation by the cytochrome P450 monooxygenase mfmF. The resultant cyclopolic acid (2,5-dihydroxy-4-(hydroxymethyl)-7-methoxy-6-methylphthalide) is then farnesylated by the DMATS-type prenyltransferase mfmD to afford 5-O-farnesylcyclopolic acid. Finally, the Pyr4-family terpene cyclase mfmH cyclizes the farnesyl moiety of 5-O-farnesylcyclopolic acid into a drimane-like structure, thus completing the biosynthesis of 11'-O-desmethylfendlerol. The polypeptide is Cytochrome P450 monooxygenase mfmA (Annulohypoxylon moriforme (Filamentous fungus)).